Consider the following 88-residue polypeptide: MNRFIISMIALLAVFCAVSTASPLLYRAPQYQMYDDVQFVKRSNAELINGLIGMDLGKLSAVGKRSNAELINGLLSMNLNKLSGAGRR.

A signal peptide spans 1 to 21; sequence MNRFIISMIALLAVFCAVSTA.

It is found in the secreted. In terms of biological role, probable ligand of isoforms a and b of the calcitonin receptor-like protein, pdfr-1, a G-protein coupled receptor. May not signal through isoform c of pdfr-1. Involved in locomotion; more specifically mate searching behavior of males, independent of nutritional status. Involved in regulating the male-specific expression of TGFbeta-like daf-7 in the ASJ chemosensory neurons. Plays a role in circadian rhythms of locomotor activity. Involved in mediating arousal from the sleep-like state called lethargus, which occurs during molting between larval and adult stages, in part by regulating touch sensitivity, and working in concert with neuropeptide flp-2. In the presence of food, plays a role in initiating and extending exploratory roaming behavior, in opposition to 5-hydroxytryptamine (serotonin) signaling. The chain is Pigment dispersing factor homolog pdf-1 from Caenorhabditis elegans.